Reading from the N-terminus, the 430-residue chain is Adenylosuccinate synthetase (430 aa).

GTP-binding positions include 12–18 and 40–42; these read GDEGKGK and GHT. The Proton acceptor role is filled by D13. D13 and G40 together coordinate Mg(2+). Residues 13–16, 38–41, T128, R142, Q223, T238, and R302 contribute to the IMP site; these read DEGK and NAGH. H41 functions as the Proton donor in the catalytic mechanism. 298 to 304 is a binding site for substrate; sequence TTTGRPR. GTP-binding positions include R304, 330–332, and 412–414; these read SID and SVG.

It belongs to the adenylosuccinate synthetase family. As to quaternary structure, homodimer. Mg(2+) serves as cofactor.

It is found in the cytoplasm. It carries out the reaction IMP + L-aspartate + GTP = N(6)-(1,2-dicarboxyethyl)-AMP + GDP + phosphate + 2 H(+). It functions in the pathway purine metabolism; AMP biosynthesis via de novo pathway; AMP from IMP: step 1/2. Functionally, plays an important role in the de novo pathway of purine nucleotide biosynthesis. Catalyzes the first committed step in the biosynthesis of AMP from IMP. The protein is Adenylosuccinate synthetase of Streptococcus equi subsp. equi (strain 4047).